The sequence spans 362 residues: Adenosine deaminase (362 aa).

Zn(2+)-binding residues include His19 and His21. Substrate-binding residues include His21, Asp23, and Gly181. Zn(2+) is bound at residue His208. Residue Glu211 is the Proton donor of the active site. Asp300 serves as a coordination point for Zn(2+).

Belongs to the metallo-dependent hydrolases superfamily. Adenosine and AMP deaminases family. Adenosine deaminase subfamily. Zn(2+) is required as a cofactor.

It catalyses the reaction adenosine + H2O + H(+) = inosine + NH4(+). The catalysed reaction is 2'-deoxyadenosine + H2O + H(+) = 2'-deoxyinosine + NH4(+). Its function is as follows. Catalyzes the hydrolytic deamination of adenosine and 2-deoxyadenosine. This is Adenosine deaminase from Mycobacterium sp. (strain MCS).